The chain runs to 142 residues: Large ribosomal subunit protein uL13 (142 aa).

It belongs to the universal ribosomal protein uL13 family. In terms of assembly, part of the 50S ribosomal subunit.

Functionally, this protein is one of the early assembly proteins of the 50S ribosomal subunit, although it is not seen to bind rRNA by itself. It is important during the early stages of 50S assembly. The sequence is that of Large ribosomal subunit protein uL13 from Azotobacter vinelandii (strain DJ / ATCC BAA-1303).